The following is a 466-amino-acid chain: MAQNIGKVVQVIGPVVDVKFQKDKLPKLNNAVNIELNGHTLVIEVAQQLGDDIVRCIAMDSTDGLMRNQEAVDTGSAIQVPVGKATLGRMFNVLGEPIDGKPFDTKDVVMHPIHRHPPSFEEQQTQPEMFETGIKVVDLICPYVRGGKIGLFGGAGVGKTVLIQELINNIATQHGGLSVFAGVGERTREGNDLYYEMMESGVINKTALCFGQMNEPPGARMRIALAGLTMAEYFRDDEGQDVLLFIDNIFRFTQAGSEVSALLGRMPSAVGYQPTLATEMGALQERITSTSKGSITSVQAVYVPADDLTDPAPATTFAHLDATTVLSRAITEKGIYPAVDPLDSTSRILDPKIVGQEHYETAREVQEILQRYKELQDIIAILGMDELSDADKITVSRARKVERFLSQPFNVAEQFTGTAGVYVTIGDTIKGFKEILEGQHDDLPESAFLLVGTIEDAVVKAKKIKG.

153–160 (GGAGVGKT) provides a ligand contact to ATP.

It belongs to the ATPase alpha/beta chains family. F-type ATPases have 2 components, CF(1) - the catalytic core - and CF(0) - the membrane proton channel. CF(1) has five subunits: alpha(3), beta(3), gamma(1), delta(1), epsilon(1). CF(0) has three main subunits: a, b and c.

The protein resides in the cell membrane. It catalyses the reaction 4 Na(+)(in) + ATP + H2O = 4 Na(+)(out) + ADP + phosphate + H(+). Inhibited by nitrate. Its function is as follows. Produces ATP from ADP in the presence of a sodium ion gradient across the membrane. The beta chain is the catalytic subunit. The polypeptide is ATP synthase subunit beta, sodium ion specific (Acetobacterium woodii (strain ATCC 29683 / DSM 1030 / JCM 2381 / KCTC 1655 / WB1)).